We begin with the raw amino-acid sequence, 508 residues long: Transposase (508 aa).

An HTH IS21-type domain is found at 3–65 (LLSVIRRWHF…PFADRLSAWL (63 aa)). The Integrase catalytic domain occupies 124–299 (LAFEPGEAFQ…TIADIWVEEV (176 aa)).

Belongs to the transposase IS21/IS408/IS1162 family.

Its function is as follows. Required for the transposition of the insertion element. The chain is Transposase (nmoT) from Aminobacter aminovorans (Chelatobacter heintzii).